A 291-amino-acid chain; its full sequence is Probable xyloglucan endotransglucosylase/hydrolase protein 16 (291 aa).

A signal peptide spans 1–24; sequence MGRILNRTVLMTLLVVTMAGTAFS. The 191-residue stretch at 25-215 folds into the GH16 domain; sequence GSFNEEFDLT…WSKAPFTAYY (191 aa). Catalysis depends on Glu-101, which acts as the Nucleophile. Glu-105 serves as the catalytic Proton donor. Glu-105 contributes to the xyloglucan binding site. N-linked (GlcNAc...) asparagine glycosylation occurs at Asn-109. Residues 118-120, 128-130, 194-195, and Gly-199 contribute to the xyloglucan site; these read HTN, NRE, and DW. 2 cysteine pairs are disulfide-bonded: Cys-223/Cys-232 and Cys-272/Cys-286. Arg-277 contributes to the xyloglucan binding site.

Belongs to the glycosyl hydrolase 16 family. XTH group 2 subfamily. In terms of processing, contains at least one intrachain disulfide bond essential for its enzymatic activity.

Its subcellular location is the secreted. The protein localises to the cell wall. The protein resides in the extracellular space. It localises to the apoplast. The enzyme catalyses breaks a beta-(1-&gt;4) bond in the backbone of a xyloglucan and transfers the xyloglucanyl segment on to O-4 of the non-reducing terminal glucose residue of an acceptor, which can be a xyloglucan or an oligosaccharide of xyloglucan.. Its function is as follows. Catalyzes xyloglucan endohydrolysis (XEH) and/or endotransglycosylation (XET). Cleaves and religates xyloglucan polymers, an essential constituent of the primary cell wall, and thereby participates in cell wall construction of growing tissues. The chain is Probable xyloglucan endotransglucosylase/hydrolase protein 16 (XTH16) from Arabidopsis thaliana (Mouse-ear cress).